Here is a 210-residue protein sequence, read N- to C-terminus: Probable nicotinate-nucleotide adenylyltransferase (210 aa).

It belongs to the NadD family.

The catalysed reaction is nicotinate beta-D-ribonucleotide + ATP + H(+) = deamido-NAD(+) + diphosphate. The protein operates within cofactor biosynthesis; NAD(+) biosynthesis; deamido-NAD(+) from nicotinate D-ribonucleotide: step 1/1. Functionally, catalyzes the reversible adenylation of nicotinate mononucleotide (NaMN) to nicotinic acid adenine dinucleotide (NaAD). The protein is Probable nicotinate-nucleotide adenylyltransferase of Methylococcus capsulatus (strain ATCC 33009 / NCIMB 11132 / Bath).